The chain runs to 234 residues: UPF0502 protein BPSS1373 (234 aa).

This sequence belongs to the UPF0502 family.

The polypeptide is UPF0502 protein BPSS1373 (Burkholderia pseudomallei (strain K96243)).